Here is a 215-residue protein sequence, read N- to C-terminus: Triosephosphate isomerase (215 aa).

H82 functions as the Electrophile in the catalytic mechanism. E153 acts as the Proton acceptor in catalysis.

The protein belongs to the triosephosphate isomerase family. In terms of assembly, homodimer.

The enzyme catalyses D-glyceraldehyde 3-phosphate = dihydroxyacetone phosphate. The protein operates within carbohydrate biosynthesis; gluconeogenesis. It participates in carbohydrate degradation; glycolysis; D-glyceraldehyde 3-phosphate from glycerone phosphate: step 1/1. This Heliothis virescens (Tobacco budworm moth) protein is Triosephosphate isomerase (Tpi).